The following is a 162-amino-acid chain: NADH-quinone oxidoreductase subunit I (162 aa).

2 consecutive 4Fe-4S ferredoxin-type domains span residues 54-83 (RRYENGEERCIACKLCEVVCPALAITINST) and 93-122 (SSYEMDLFKCIFCGYCEESCPVDSIVETNI). 8 residues coordinate [4Fe-4S] cluster: cysteine 63, cysteine 66, cysteine 69, cysteine 73, cysteine 102, cysteine 105, cysteine 108, and cysteine 112.

This sequence belongs to the complex I 23 kDa subunit family. NDH-1 is composed of 14 different subunits. Subunits NuoA, H, J, K, L, M, N constitute the membrane sector of the complex. [4Fe-4S] cluster is required as a cofactor.

The protein localises to the cell inner membrane. The enzyme catalyses a quinone + NADH + 5 H(+)(in) = a quinol + NAD(+) + 4 H(+)(out). NDH-1 shuttles electrons from NADH, via FMN and iron-sulfur (Fe-S) centers, to quinones in the respiratory chain. The immediate electron acceptor for the enzyme in this species is believed to be ubiquinone. Couples the redox reaction to proton translocation (for every two electrons transferred, four hydrogen ions are translocated across the cytoplasmic membrane), and thus conserves the redox energy in a proton gradient. The polypeptide is NADH-quinone oxidoreductase subunit I (Francisella tularensis subsp. tularensis (strain FSC 198)).